The sequence spans 206 residues: MPDAAHAAVPGDLVELGRINGAYGVKGWVKVQPHSAQADVLRKASSWWLTRLVPEKARGVVASAPQEYKVVQARPQGASVVAQLAGITDRDQAEALRGLAVQVSRSQFPAAADDEYYWVDLIGCAFYTNAEGEPARVGVVEEVFDNGAHAILRVVLQRAPAPGGEPEPRRDAKGRPLEMLVPFVGAHILAVDLSARRIDSNWPTEL.

Positions 113–206 (DDEYYWVDLI…RIDSNWPTEL (94 aa)) constitute a PRC barrel domain.

This sequence belongs to the RimM family. Binds ribosomal protein uS19.

The protein resides in the cytoplasm. In terms of biological role, an accessory protein needed during the final step in the assembly of 30S ribosomal subunit, possibly for assembly of the head region. Essential for efficient processing of 16S rRNA. May be needed both before and after RbfA during the maturation of 16S rRNA. It has affinity for free ribosomal 30S subunits but not for 70S ribosomes. The protein is Ribosome maturation factor RimM of Bordetella petrii (strain ATCC BAA-461 / DSM 12804 / CCUG 43448).